The following is a 226-amino-acid chain: Putative 5'-nucleotidase alr3139 (226 aa).

Residues Asp-8, Asp-9, Ser-38, and Asn-89 each coordinate a divalent metal cation.

Belongs to the SurE nucleotidase family. A divalent metal cation is required as a cofactor.

Its subcellular location is the cytoplasm. It carries out the reaction a ribonucleoside 5'-phosphate + H2O = a ribonucleoside + phosphate. Its function is as follows. Nucleotidase that shows phosphatase activity on nucleoside 5'-monophosphates. This chain is Putative 5'-nucleotidase alr3139, found in Nostoc sp. (strain PCC 7120 / SAG 25.82 / UTEX 2576).